The following is a 160-amino-acid chain: MADGNGTQETQDQAPAINAMVQYTKDFSFENPNAPRSLGPQEKAPNIAIQVHVNAQQLAESDFEVNIVLEGSAGEGANTLFKFELDYAGMFRLLNISPNDMHPVVMIECPRLLFPFARQIIADAVRSGGFPPLYIDPIDFAALYRKRLDEVAASAPQLKS.

Belongs to the SecB family. In terms of assembly, homotetramer, a dimer of dimers. One homotetramer interacts with 1 SecA dimer.

It is found in the cytoplasm. In terms of biological role, one of the proteins required for the normal export of preproteins out of the cell cytoplasm. It is a molecular chaperone that binds to a subset of precursor proteins, maintaining them in a translocation-competent state. It also specifically binds to its receptor SecA. The sequence is that of Protein-export protein SecB from Beijerinckia indica subsp. indica (strain ATCC 9039 / DSM 1715 / NCIMB 8712).